The primary structure comprises 224 residues: C-&gt;U-editing enzyme APOBEC-2 (224 aa).

A disordered region spans residues 1 to 24; the sequence is MAQKEEAAVATEAASQNGEDLENL. Zn(2+)-binding residues include E60 and H98. The CMP/dCMP-type deaminase domain maps to 64–169; sequence GRNKTFLCYV…PEIQAALKKL (106 aa). E100 acts as the Proton donor in catalysis. The Zn(2+) site is built by C128 and C131.

Belongs to the cytidine and deoxycytidylate deaminase family. Homotetramer. It depends on Zn(2+) as a cofactor. As to expression, expressed exclusively in heart and skeletal muscle.

The enzyme catalyses cytidine(6666) in apoB mRNA + H2O + H(+) = uridine(6666) in apoB mRNA + NH4(+). In terms of biological role, probable C to U editing enzyme whose physiological substrate is not yet known. Does not display detectable apoB mRNA editing. Has a low intrinsic cytidine deaminase activity. May play a role in the epigenetic regulation of gene expression through the process of active DNA demethylation. In Homo sapiens (Human), this protein is C-&gt;U-editing enzyme APOBEC-2 (APOBEC2).